Here is a 190-residue protein sequence, read N- to C-terminus: Elongation factor P-like protein (190 aa).

It belongs to the elongation factor P family.

The polypeptide is Elongation factor P-like protein (Edwardsiella ictaluri (strain 93-146)).